A 199-amino-acid polypeptide reads, in one-letter code: Glycerol-3-phosphate acyltransferase (199 aa).

Helical transmembrane passes span 3–23 (AAVW…GVLV), 50–70 (WGPA…AVLV), 78–98 (DWML…SVFL), 113–133 (LLFL…SVIL), and 154–174 (LALG…LLIF).

This sequence belongs to the PlsY family. In terms of assembly, probably interacts with PlsX.

Its subcellular location is the cell inner membrane. The enzyme catalyses an acyl phosphate + sn-glycerol 3-phosphate = a 1-acyl-sn-glycero-3-phosphate + phosphate. Its pathway is lipid metabolism; phospholipid metabolism. In terms of biological role, catalyzes the transfer of an acyl group from acyl-phosphate (acyl-PO(4)) to glycerol-3-phosphate (G3P) to form lysophosphatidic acid (LPA). This enzyme utilizes acyl-phosphate as fatty acyl donor, but not acyl-CoA or acyl-ACP. The sequence is that of Glycerol-3-phosphate acyltransferase from Thermus thermophilus (strain ATCC BAA-163 / DSM 7039 / HB27).